The following is a 318-amino-acid chain: tRNA uridine(34) hydroxylase (318 aa).

The Rhodanese domain occupies 123-217; sequence EDDDTVIIDA…YGKDPETKGQ (95 aa). Cysteine 177 (cysteine persulfide intermediate) is an active-site residue.

This sequence belongs to the TrhO family.

The enzyme catalyses uridine(34) in tRNA + AH2 + O2 = 5-hydroxyuridine(34) in tRNA + A + H2O. Functionally, catalyzes oxygen-dependent 5-hydroxyuridine (ho5U) modification at position 34 in tRNAs. The polypeptide is tRNA uridine(34) hydroxylase (Staphylococcus aureus (strain bovine RF122 / ET3-1)).